A 971-amino-acid polypeptide reads, in one-letter code: Exportin-2 (971 aa).

Methionine 1 carries the post-translational modification N-acetylmethionine. Residues alanine 29–serine 102 enclose the Importin N-terminal domain. Serine 112 bears the Phosphoserine mark. An N6-acetyllysine mark is found at lysine 574 and lysine 824. Residue serine 931 is modified to Phosphoserine.

Belongs to the XPO2/CSE1 family. As to quaternary structure, found in a complex with CSE1L/XPO2, Ran and KPNA2. Binds with high affinity to importin-alpha only in the presence of RanGTP. The complex is dissociated by the combined action of RanBP1 and RanGAP1. Interacts with CFTR.

Its subcellular location is the cytoplasm. The protein localises to the nucleus. Export receptor for importin-alpha. Mediates importin-alpha re-export from the nucleus to the cytoplasm after import substrates (cargos) have been released into the nucleoplasm. In the nucleus binds cooperatively to importin-alpha and to the GTPase Ran in its active GTP-bound form. Docking of this trimeric complex to the nuclear pore complex (NPC) is mediated through binding to nucleoporins. Upon transit of a nuclear export complex into the cytoplasm, disassembling of the complex and hydrolysis of Ran-GTP to Ran-GDP (induced by RANBP1 and RANGAP1, respectively) cause release of the importin-alpha from the export receptor. CSE1L/XPO2 then return to the nuclear compartment and mediate another round of transport. The directionality of nuclear export is thought to be conferred by an asymmetric distribution of the GTP- and GDP-bound forms of Ran between the cytoplasm and nucleus. The chain is Exportin-2 (CSE1L) from Pongo abelii (Sumatran orangutan).